The following is a 231-amino-acid chain: NADH-ubiquinone oxidoreductase chain 4 (231 aa).

The next 7 membrane-spanning stretches (helical) occupy residues proline 1–isoleucine 21, valine 34–leucine 54, isoleucine 63–glycine 85, alanine 89–tyrosine 111, methionine 128–proline 148, threonine 169–leucine 189, and leucine 211–threonine 231.

The protein belongs to the complex I subunit 4 family.

Its subcellular location is the mitochondrion membrane. It carries out the reaction a ubiquinone + NADH + 5 H(+)(in) = a ubiquinol + NAD(+) + 4 H(+)(out). In terms of biological role, core subunit of the mitochondrial membrane respiratory chain NADH dehydrogenase (Complex I) that is believed to belong to the minimal assembly required for catalysis. Complex I functions in the transfer of electrons from NADH to the respiratory chain. The immediate electron acceptor for the enzyme is believed to be ubiquinone. The polypeptide is NADH-ubiquinone oxidoreductase chain 4 (MT-ND4) (Sistrurus miliarius (Pigmy rattlesnake)).